The primary structure comprises 85 residues: ATP synthase subunit c (85 aa).

The next 2 helical transmembrane spans lie at leucine 20–phenylalanine 40 and phenylalanine 65–alanine 85.

This sequence belongs to the ATPase C chain family. As to quaternary structure, F-type ATPases have 2 components, F(1) - the catalytic core - and F(0) - the membrane proton channel. F(1) has five subunits: alpha(3), beta(3), gamma(1), delta(1), epsilon(1). F(0) has three main subunits: a(1), b(2) and c(10-14). The alpha and beta chains form an alternating ring which encloses part of the gamma chain. F(1) is attached to F(0) by a central stalk formed by the gamma and epsilon chains, while a peripheral stalk is formed by the delta and b chains.

The protein localises to the cell inner membrane. In terms of biological role, f(1)F(0) ATP synthase produces ATP from ADP in the presence of a proton or sodium gradient. F-type ATPases consist of two structural domains, F(1) containing the extramembraneous catalytic core and F(0) containing the membrane proton channel, linked together by a central stalk and a peripheral stalk. During catalysis, ATP synthesis in the catalytic domain of F(1) is coupled via a rotary mechanism of the central stalk subunits to proton translocation. Key component of the F(0) channel; it plays a direct role in translocation across the membrane. A homomeric c-ring of between 10-14 subunits forms the central stalk rotor element with the F(1) delta and epsilon subunits. The protein is ATP synthase subunit c of Gluconobacter oxydans (strain 621H) (Gluconobacter suboxydans).